Reading from the N-terminus, the 239-residue chain is uncharacterized protein (239 aa).

The disordered stretch occupies residues 129-155; the sequence is DSLDDEDDNMISSNDPTKSPEEHDTTT. Serine 160 is modified (phosphoserine).

This is an uncharacterized protein from Schizosaccharomyces pombe (strain 972 / ATCC 24843) (Fission yeast).